The sequence spans 1128 residues: Major DNA-binding protein (1128 aa).

The interval leucine 1104–valine 1128 is required for nuclear localization.

The protein belongs to the herpesviridae major DNA-binding protein family. As to quaternary structure, homooligomers. Forms double-helical filaments necessary for the formation of replication compartments within the host nucleus. Interacts with the origin-binding protein. Interacts with the helicase primase complex; this interaction stimulates primer synthesis activity of the helicase-primase complex. Interacts with the DNA polymerase. Interacts with the alkaline exonuclease; this interaction increases its nuclease processivity.

It localises to the virion tegument. The protein resides in the host nucleus. Plays several crucial roles in viral infection. Participates in the opening of the viral DNA origin to initiate replication by interacting with the origin-binding protein. May disrupt loops, hairpins and other secondary structures present on ssDNA to reduce and eliminate pausing of viral DNA polymerase at specific sites during elongation. Promotes viral DNA recombination by performing strand-transfer, characterized by the ability to transfer a DNA strand from a linear duplex to a complementary single-stranded DNA circle. Can also catalyze the renaturation of complementary single strands. Additionally, reorganizes the host cell nucleus, leading to the formation of prereplicative sites and replication compartments. This process is driven by the protein which can form double-helical filaments in the absence of DNA. The polypeptide is Major DNA-binding protein (Homo sapiens (Human)).